Reading from the N-terminus, the 358-residue chain is MFDKLEDLLIRFQEIQNELNEPTVTNDQARFRKLMKEQNDLGEIVDKYLEYKQTKKNIEESLELLDEESDEEMRELAKEELSTSKANLVVIEEQLKILLLPKDPNDSKNVIVEIRGGAGGDEAALFAAELFRMYSKYAETMRWKIDMMNLNENGIGGFKEVIFMINGQGAYSKLKYESGVHRVQRIPVTESGGRIHTSTVTVAIMPEAEEVDVELNMNDCRFDVFRSSGNGGQCVNTTDSAVRLTHMPTGIVISCQDEKSQLKNRDKALKVLRARLYELELEKAHDAEAAARKSQVGTGDRSEKIRTYNFPQGRCTDHRIKLTSHRLDDIMNGDLQEVIDSLTAADQAAKLSNMQDEY.

Residue Q233 is modified to N5-methylglutamine.

This sequence belongs to the prokaryotic/mitochondrial release factor family. Methylated by PrmC. Methylation increases the termination efficiency of RF1.

The protein localises to the cytoplasm. Peptide chain release factor 1 directs the termination of translation in response to the peptide chain termination codons UAG and UAA. The protein is Peptide chain release factor 1 of Lachnoclostridium phytofermentans (strain ATCC 700394 / DSM 18823 / ISDg) (Clostridium phytofermentans).